Reading from the N-terminus, the 467-residue chain is Indoleacetamide hydrolase (467 aa).

Residues Lys-74 and Ser-149 each act as charge relay system in the active site. Ser-173 acts as the Acyl-ester intermediate in catalysis.

It belongs to the amidase family.

It functions in the pathway plant hormone metabolism; auxin biosynthesis. Functionally, hydrolyzes indole-3-acetamide (IAM) into indole-3-acetic acid (IAA). This Agrobacterium vitis (Rhizobium vitis) protein is Indoleacetamide hydrolase (TA-iaaH).